Consider the following 133-residue polypeptide: Small ribosomal subunit protein uS8 (133 aa).

Belongs to the universal ribosomal protein uS8 family. In terms of assembly, part of the 30S ribosomal subunit. Contacts proteins S5 and S12.

In terms of biological role, one of the primary rRNA binding proteins, it binds directly to 16S rRNA central domain where it helps coordinate assembly of the platform of the 30S subunit. The protein is Small ribosomal subunit protein uS8 of Mycoplasma mobile (strain ATCC 43663 / 163K / NCTC 11711) (Mesomycoplasma mobile).